We begin with the raw amino-acid sequence, 599 residues long: Fructan 1-exohydrolase (599 aa).

Positions M1–A16 are cleaved as a signal peptide. D78 is a catalytic residue. N-linked (GlcNAc...) asparagine glycans are attached at residues N171, N239, and N251. Residues C449 and C495 are joined by a disulfide bond.

The protein belongs to the glycosyl hydrolase 32 family.

The enzyme catalyses Hydrolysis of terminal, non-reducing (2-&gt;1)-linked beta-D-fructofuranose residues in fructans.. Inhibited by sucrose. In terms of biological role, hydrolyzes inulin-type beta-(2,1)-fructans. May play a role as a beta-(2,1)-trimmer during graminan biosynthesis. This is Fructan 1-exohydrolase from Hordeum vulgare (Barley).